Consider the following 952-residue polypeptide: Serine/threonine-protein kinase atg1 (952 aa).

Residues 23-329 (FTINEQIGKG…FPEYFAHPVV (307 aa)) enclose the Protein kinase domain. Residues 29-37 (IGKGSFATV) and Lys52 contribute to the ATP site. The active-site Proton acceptor is Asp166. Disordered regions lie at residues 331-478 (EPIP…EAEQ), 510-573 (GRAN…SSPS), 783-806 (RLPE…GGSS), and 920-952 (AIAK…TPPK). 2 stretches are compositionally biased toward basic and acidic residues: residues 338-347 (GDDRPKEKSP) and 356-372 (SLRD…HIDT). Positions 386–398 (SPRTPNIESNQPF) are enriched in polar residues. A compositionally biased stretch (basic and acidic residues) spans 429-439 (PRQRDRKDRTE). Composition is skewed to polar residues over residues 459–475 (ANLQ…SITE), 553–573 (PDTS…SSPS), and 793–806 (NNRS…GGSS). Residues 933-952 (SPRRSYSGGTTPTINNTPPK) are compositionally biased toward low complexity.

It belongs to the protein kinase superfamily. Ser/Thr protein kinase family. APG1/unc-51/ULK1 subfamily. In terms of assembly, homodimer. Forms a ternary complex with ATG13 and ATG17.

It is found in the cytoplasm. Its subcellular location is the preautophagosomal structure membrane. It catalyses the reaction L-seryl-[protein] + ATP = O-phospho-L-seryl-[protein] + ADP + H(+). It carries out the reaction L-threonyl-[protein] + ATP = O-phospho-L-threonyl-[protein] + ADP + H(+). In terms of biological role, serine/threonine protein kinase involved in the cytoplasm to vacuole transport (Cvt) and found to be essential in autophagy, where it is required for the formation of autophagosomes. Involved in the clearance of protein aggregates which cannot be efficiently cleared by the proteasome. Required for selective autophagic degradation of the nucleus (nucleophagy) as well as for mitophagy which contributes to regulate mitochondrial quantity and quality by eliminating the mitochondria to a basal level to fulfill cellular energy requirements and preventing excess ROS production. Also involved in endoplasmic reticulum-specific autophagic process, in selective removal of ER-associated degradation (ERAD) substrates. Plays a key role in ATG9 and ATG23 cycling through the pre-autophagosomal structure and is necessary to promote ATG18 binding to ATG9 through phosphorylation of ATG9. Catalyzes phosphorylation of ATG4, decreasing the interaction between ATG4 and ATG8 and impairing deconjugation of PE-conjugated forms of ATG8. The chain is Serine/threonine-protein kinase atg1 from Botryotinia fuckeliana (strain B05.10) (Noble rot fungus).